The chain runs to 317 residues: Melanocyte-stimulating hormone receptor (317 aa).

Residues Met1–Glu37 lie on the Extracellular side of the membrane. Asn29 carries an N-linked (GlcNAc...) asparagine glycan. Residues Val38 to Ile63 form a helical membrane-spanning segment. Over Ala64–Pro72 the chain is Cytoplasmic. The chain crosses the membrane as a helical span at residues Met73 to Leu93. The Extracellular segment spans residues Glu94 to Asn118. The helical transmembrane segment at Val119–Val140 threads the bilayer. Topologically, residues Asp141–Arg163 are cytoplasmic. Residues Ile164 to Tyr183 traverse the membrane as a helical segment. Over Asn184–Cys191 the chain is Extracellular. The chain crosses the membrane as a helical span at residues Leu192–Leu211. Residues Ala212 to Ala240 are Cytoplasmic-facing. Residues Ala241 to Leu266 traverse the membrane as a helical segment. Topologically, residues Cys267–Asn279 are extracellular. A helical transmembrane segment spans residues Phe280–Phe300. The Cytoplasmic portion of the chain corresponds to Arg301–Trp317. A lipid anchor (S-palmitoyl cysteine) is attached at Cys315.

It belongs to the G-protein coupled receptor 1 family. As to quaternary structure, interacts with MGRN1, but does not undergo MGRN1-mediated ubiquitination; this interaction competes with GNAS-binding and thus inhibits agonist-induced cAMP production. Interacts with OPN3; the interaction results in a decrease in MC1R-mediated cAMP signaling and ultimately a decrease in melanin production in melanocytes.

The protein localises to the cell membrane. In terms of biological role, receptor for MSH (alpha, beta and gamma) and ACTH. The activity of this receptor is mediated by G proteins which activate adenylate cyclase. Mediates melanogenesis, the production of eumelanin (black/brown) and phaeomelanin (red/yellow), via regulation of cAMP signaling in melanocytes. This chain is Melanocyte-stimulating hormone receptor (MC1R), found in Capreolus capreolus (European roe deer).